The sequence spans 130 residues: Small ribosomal subunit protein uS8 (130 aa).

This sequence belongs to the universal ribosomal protein uS8 family. Component of the 40S ribosomal subunit. Part of the small subunit (SSU) processome, composed of more than 70 proteins and the RNA chaperone small nucleolar RNA (snoRNA) U3.

It is found in the cytoplasm. It localises to the nucleus. The protein resides in the nucleolus. In terms of biological role, component of the small ribosomal subunit. Part of the small subunit (SSU) processome, first precursor of the small eukaryotic ribosomal subunit. During the assembly of the SSU processome in the nucleolus, many ribosome biogenesis factors, an RNA chaperone and ribosomal proteins associate with the nascent pre-rRNA and work in concert to generate RNA folding, modifications, rearrangements and cleavage as well as targeted degradation of pre-ribosomal RNA by the RNA exosome. Required for erythropoiesis during embryonic development. This Danio rerio (Zebrafish) protein is Small ribosomal subunit protein uS8.